Here is a 376-residue protein sequence, read N- to C-terminus: tRNA-specific 2-thiouridylase MnmA (376 aa).

Residues 17 to 24 and Met43 each bind ATP; that span reads GMSGGVDS. An interaction with target base in tRNA region spans residues 103–105; that stretch reads NPD. Cys108 (nucleophile) is an active-site residue. Residues Cys108 and Cys204 are joined by a disulfide bond. Residue Gly132 participates in ATP binding. Residues 154 to 156 form an interaction with tRNA region; that stretch reads KDQ. Cys204 functions as the Cysteine persulfide intermediate in the catalytic mechanism. The segment at 316–317 is interaction with tRNA; that stretch reads RY.

It belongs to the MnmA/TRMU family.

It localises to the cytoplasm. The enzyme catalyses S-sulfanyl-L-cysteinyl-[protein] + uridine(34) in tRNA + AH2 + ATP = 2-thiouridine(34) in tRNA + L-cysteinyl-[protein] + A + AMP + diphosphate + H(+). Functionally, catalyzes the 2-thiolation of uridine at the wobble position (U34) of tRNA, leading to the formation of s(2)U34. This is tRNA-specific 2-thiouridylase MnmA from Pseudomonas syringae pv. syringae (strain B728a).